Reading from the N-terminus, the 259-residue chain is Cytochrome c oxidase subunit 3 (259 aa).

A run of 7 helical transmembrane segments spans residues 13 to 33 (PWPL…TSWF), 36 to 56 (HGFI…FQWW), 80 to 100 (GMVL…WAYF), 125 to 145 (FQIP…VTWA), 154 to 174 (HAEA…FTLL), 195 to 215 (FFVA…FLLI), and 237 to 257 (AWYW…IYWW).

The protein belongs to the cytochrome c oxidase subunit 3 family. In terms of assembly, component of the cytochrome c oxidase (complex IV, CIV), a multisubunit enzyme composed of a catalytic core of 3 subunits and several supernumerary subunits. The complex exists as a monomer or a dimer and forms supercomplexes (SCs) in the inner mitochondrial membrane with ubiquinol-cytochrome c oxidoreductase (cytochrome b-c1 complex, complex III, CIII).

It localises to the mitochondrion inner membrane. It catalyses the reaction 4 Fe(II)-[cytochrome c] + O2 + 8 H(+)(in) = 4 Fe(III)-[cytochrome c] + 2 H2O + 4 H(+)(out). Component of the cytochrome c oxidase, the last enzyme in the mitochondrial electron transport chain which drives oxidative phosphorylation. The respiratory chain contains 3 multisubunit complexes succinate dehydrogenase (complex II, CII), ubiquinol-cytochrome c oxidoreductase (cytochrome b-c1 complex, complex III, CIII) and cytochrome c oxidase (complex IV, CIV), that cooperate to transfer electrons derived from NADH and succinate to molecular oxygen, creating an electrochemical gradient over the inner membrane that drives transmembrane transport and the ATP synthase. Cytochrome c oxidase is the component of the respiratory chain that catalyzes the reduction of oxygen to water. Electrons originating from reduced cytochrome c in the intermembrane space (IMS) are transferred via the dinuclear copper A center (CU(A)) of subunit 2 and heme A of subunit 1 to the active site in subunit 1, a binuclear center (BNC) formed by heme A3 and copper B (CU(B)). The BNC reduces molecular oxygen to 2 water molecules using 4 electrons from cytochrome c in the IMS and 4 protons from the mitochondrial matrix. The sequence is that of Cytochrome c oxidase subunit 3 (COIII) from Heterololigo bleekeri (Spear squid).